The following is a 544-amino-acid chain: CTP synthase (544 aa).

Residues 1 to 265 are amidoligase domain; sequence MARFIFITGG…DEAVLSAFGI (265 aa). Residue Ser13 participates in CTP binding. Ser13 is a UTP binding site. 14–19 lines the ATP pocket; that stretch reads SLGKGL. L-glutamine is bound at residue Tyr54. Asp71 provides a ligand contact to ATP. Mg(2+) is bound by residues Asp71 and Glu139. CTP contacts are provided by residues 146–148, 186–191, and Lys222; these read DIE and KTKPTQ. UTP-binding positions include 186-191 and Lys222; that span reads KTKPTQ. Residues 291–543 form the Glutamine amidotransferase type-1 domain; it reads TIGVVGKYVG…IAAALQQSRL (253 aa). L-glutamine is bound at residue Gly355. Cys382 serves as the catalytic Nucleophile; for glutamine hydrolysis. L-glutamine-binding positions include 383 to 386, Glu406, and Arg471; that span reads LGMQ. Catalysis depends on residues His516 and Glu518.

It belongs to the CTP synthase family. As to quaternary structure, homotetramer.

It carries out the reaction UTP + L-glutamine + ATP + H2O = CTP + L-glutamate + ADP + phosphate + 2 H(+). The enzyme catalyses L-glutamine + H2O = L-glutamate + NH4(+). The catalysed reaction is UTP + NH4(+) + ATP = CTP + ADP + phosphate + 2 H(+). It functions in the pathway pyrimidine metabolism; CTP biosynthesis via de novo pathway; CTP from UDP: step 2/2. With respect to regulation, allosterically activated by GTP, when glutamine is the substrate; GTP has no effect on the reaction when ammonia is the substrate. The allosteric effector GTP functions by stabilizing the protein conformation that binds the tetrahedral intermediate(s) formed during glutamine hydrolysis. Inhibited by the product CTP, via allosteric rather than competitive inhibition. Its function is as follows. Catalyzes the ATP-dependent amination of UTP to CTP with either L-glutamine or ammonia as the source of nitrogen. Regulates intracellular CTP levels through interactions with the four ribonucleotide triphosphates. The polypeptide is CTP synthase (Rhizorhabdus wittichii (strain DSM 6014 / CCUG 31198 / JCM 15750 / NBRC 105917 / EY 4224 / RW1) (Sphingomonas wittichii)).